The chain runs to 88 residues: Small ribosomal subunit protein bS20 (88 aa).

Residues 1–25 form a disordered region; it reads MANSPQAKKRARQNERRAEVNKARR. Over residues 12-22 the composition is skewed to basic and acidic residues; that stretch reads RQNERRAEVNK.

Belongs to the bacterial ribosomal protein bS20 family.

In terms of biological role, binds directly to 16S ribosomal RNA. This chain is Small ribosomal subunit protein bS20, found in Dinoroseobacter shibae (strain DSM 16493 / NCIMB 14021 / DFL 12).